Here is a 379-residue protein sequence, read N- to C-terminus: Fructose-1,6-bisphosphate aldolase/phosphatase (379 aa).

The active-site Proton acceptor; for FBP phosphatase activity is Asp-13. Residues Asp-13, His-20, Asp-51, and Asp-52 each contribute to the Mg(2+) site. Position 20 (His-20) interacts with beta-D-fructose 1,6-bisphosphate. His-20 is a dihydroxyacetone phosphate binding site. Tyr-89 is a beta-D-fructose 1,6-bisphosphate binding site. Gln-93 serves as a coordination point for Mg(2+). 102–103 (GN) is a binding site for beta-D-fructose 1,6-bisphosphate. A Mg(2+)-binding site is contributed by Asp-130. Lys-131 provides a ligand contact to beta-D-fructose 1,6-bisphosphate. Residue Lys-131 participates in dihydroxyacetone phosphate binding. Tyr-227 serves as the catalytic Proton donor/acceptor; for FBP aldolase activity. Residues Lys-230, Asp-231, and Asp-232 each coordinate Mg(2+). Catalysis depends on Lys-230, which acts as the Schiff-base intermediate with DHAP; for FBP aldolase activity. Residues 240 to 241 (QS), Arg-264, Asp-285, and Tyr-346 each bind beta-D-fructose 1,6-bisphosphate. 2 residues coordinate dihydroxyacetone phosphate: Arg-264 and Asp-285.

Belongs to the FBP aldolase/phosphatase family. In terms of assembly, homooctamer; dimer of tetramers. Mg(2+) serves as cofactor.

It catalyses the reaction beta-D-fructose 1,6-bisphosphate + H2O = beta-D-fructose 6-phosphate + phosphate. The enzyme catalyses beta-D-fructose 1,6-bisphosphate = D-glyceraldehyde 3-phosphate + dihydroxyacetone phosphate. Its pathway is carbohydrate biosynthesis; gluconeogenesis. Its function is as follows. Catalyzes two subsequent steps in gluconeogenesis: the aldol condensation of dihydroxyacetone phosphate (DHAP) and glyceraldehyde-3-phosphate (GA3P) to fructose-1,6-bisphosphate (FBP), and the dephosphorylation of FBP to fructose-6-phosphate (F6P). This is Fructose-1,6-bisphosphate aldolase/phosphatase from Moorella thermoacetica (strain ATCC 39073 / JCM 9320).